The primary structure comprises 450 residues: 23S rRNA (uracil(1939)-C(5))-methyltransferase RlmD (450 aa).

The segment at 1 to 22 (MAKHDRGLRFQPAGGSRAPQIP) is disordered. The TRAM domain occupies 20–78 (QIPVGKKQRLTIQRLANDGRGIAFVEGRTWFVSGALAGEEVEARVLGSHGKVVEARAER). [4Fe-4S] cluster contacts are provided by Cys-91, Cys-97, Cys-100, and Cys-179. S-adenosyl-L-methionine-binding residues include Gln-283, Phe-312, Asn-317, Glu-333, Asp-360, and Asp-381. Residue Cys-407 is the Nucleophile of the active site.

Belongs to the class I-like SAM-binding methyltransferase superfamily. RNA M5U methyltransferase family. RlmD subfamily.

It catalyses the reaction uridine(1939) in 23S rRNA + S-adenosyl-L-methionine = 5-methyluridine(1939) in 23S rRNA + S-adenosyl-L-homocysteine + H(+). In terms of biological role, catalyzes the formation of 5-methyl-uridine at position 1939 (m5U1939) in 23S rRNA. The chain is 23S rRNA (uracil(1939)-C(5))-methyltransferase RlmD from Pseudomonas fluorescens (strain ATCC BAA-477 / NRRL B-23932 / Pf-5).